Consider the following 303-residue polypeptide: Mitochondrial carrier homolog 2 (303 aa).

Ala2 is subject to N-acetylalanine. Topologically, residues 2-15 are mitochondrial intermembrane; sequence ADAASQVLLGSGLT. Solcar repeat units follow at residues 2 to 98 and 118 to 206; these read ADAA…YQES and DRVI…INTY. The chain crosses the membrane as a helical span at residues 16–36; it reads ILSQPLMYVKVLIQVGYEPLP. Residues 37–77 lie on the Cytoplasmic side of the membrane; that stretch reads PTIGRNIFGRQVCQLPGLFCYAQHIASIDGRRGLFTGLTPR. Residues 78–92 traverse the membrane as a helical segment; sequence LCSGVLGTVVHGKVL. The Mitochondrial intermembrane portion of the chain corresponds to 93-135; the sequence is QYYQESEKPEELGSVTVQKEYSSSFDRVIKETTREMIARSAAT. Residues 136–156 form a helical membrane-spanning segment; that stretch reads LITHPFHVITLRSMVQFIGRE. The Cytoplasmic portion of the chain corresponds to 157 to 180; the sequence is SKYCGLCDSIVTIYREEGIVGFFA. The helical transmembrane segment at 181–199 threads the bilayer; it reads GLIPRLLGDIISLWLCNSL. Topologically, residues 200 to 231 are mitochondrial intermembrane; that stretch reads AYLINTYALDSGVSTMNEMKSYSQAVTGFFAS. A helical membrane pass occupies residues 232–252; it reads MLTYPFVLVSNLMAVNNCGLA. Over 253-280 the chain is Cytoplasmic; that stretch reads GGSPPYSPIYTSWIDCWCMLQKAGNMSR. The helical transmembrane segment at 281–303 threads the bilayer; it reads GNSLFFRKVPCGKTYCYDLRMLI.

This sequence belongs to the mitochondrial carrier (TC 2.A.29) family. Interacts with p15BID. In terms of tissue distribution, expressed in a wide variety of tissues. Predominant expressed in liver, kidney, heart, skeletal muscle and testis.

The protein resides in the mitochondrion outer membrane. Protein insertase that mediates insertion of transmembrane proteins into the mitochondrial outer membrane. Catalyzes insertion of proteins with alpha-helical transmembrane regions, such as signal-anchored, tail-anchored and multi-pass membrane proteins. Does not mediate insertion of beta-barrel transmembrane proteins. Also acts as a receptor for the truncated form of pro-apoptotic BH3-interacting domain death agonist (p15 BID) and has therefore a critical function in apoptosis. Regulates the quiescence/cycling of hematopoietic stem cells (HSCs). Acts as a regulator of mitochondrial fusion, essential for the naive-to-primed interconversion of embryonic stem cells (ESCs). Acts as a regulator of lipid homeostasis and has a regulatory role in adipocyte differentiation and biology. This is Mitochondrial carrier homolog 2 from Mus musculus (Mouse).